The chain runs to 390 residues: Prostaglandin E2 receptor EP3 subtype (390 aa).

Residues M1–A53 are Extracellular-facing. Residues N18 and N36 are each glycosylated (N-linked (GlcNAc...) asparagine). Residues F54 to R78 traverse the membrane as a helical segment. Residues R79–C91 are Cytoplasmic-facing. The helical transmembrane segment at I92–V112 threads the bilayer. Residues V113–T131 lie on the Extracellular side of the membrane. The helical transmembrane segment at F132 to V153 threads the bilayer. The Cytoplasmic portion of the chain corresponds to E154–R175. A helical membrane pass occupies residues A176–G197. Residues Q198–N227 lie on the Extracellular side of the membrane. The helical transmembrane segment at L228 to I253 threads the bilayer. Over K254–Q283 the chain is Cytoplasmic. The chain crosses the membrane as a helical span at residues L284–F307. Residues N308–F327 lie on the Extracellular side of the membrane. The chain crosses the membrane as a helical span at residues F328–L349. The Cytoplasmic portion of the chain corresponds to R350–R390.

The protein belongs to the G-protein coupled receptor 1 family. Interacts (via C-terminus) with MKLN1. As to expression, detected in kidney. Expressed in small intestine, heart, pancreas, gastric fundic mucosa, mammary artery and pulmonary vessels.

Its subcellular location is the cell membrane. Its function is as follows. Receptor for prostaglandin E2 (PGE2). The activity of this receptor can couple to both the inhibition of adenylate cyclase mediated by G(i) proteins, and to an elevation of intracellular calcium. Required for normal development of fever in response to pyrinogens, including IL1B, prostaglandin E2 and bacterial lipopolysaccharide (LPS). Required for normal potentiation of platelet aggregation by prostaglandin E2, and thus plays a role in the regulation of blood coagulation. Required for increased HCO3(-) secretion in the duodenum in response to mucosal acidification, and thereby contributes to the protection of the mucosa against acid-induced ulceration. Not required for normal kidney function, normal urine volume and osmolality. The sequence is that of Prostaglandin E2 receptor EP3 subtype (PTGER3) from Homo sapiens (Human).